The chain runs to 165 residues: Deoxyuridine 5'-triphosphate nucleotidohydrolase (165 aa).

This sequence belongs to the dUTPase family. In terms of assembly, homotrimer. The cofactor is Mg(2+).

The protein resides in the host cytoplasm. It localises to the virion. It catalyses the reaction dUTP + H2O = dUMP + diphosphate + H(+). In terms of biological role, the viral dUTPase may play a role in lowering the dUTP concentration in natural infections to minimize misincorporation of deoxyuridine into the viral DNA and ensure the fidelity of genome replication. The sequence is that of Deoxyuridine 5'-triphosphate nucleotidohydrolase from Ornithodoros (relapsing fever ticks).